The sequence spans 169 residues: Peptide methionine sulfoxide reductase MsrA (169 aa).

Residue Cys-10 is part of the active site.

The protein belongs to the MsrA Met sulfoxide reductase family.

It carries out the reaction L-methionyl-[protein] + [thioredoxin]-disulfide + H2O = L-methionyl-(S)-S-oxide-[protein] + [thioredoxin]-dithiol. The catalysed reaction is [thioredoxin]-disulfide + L-methionine + H2O = L-methionine (S)-S-oxide + [thioredoxin]-dithiol. Functionally, has an important function as a repair enzyme for proteins that have been inactivated by oxidation. Catalyzes the reversible oxidation-reduction of methionine sulfoxide in proteins to methionine. This is Peptide methionine sulfoxide reductase MsrA from Streptococcus pyogenes serotype M2 (strain MGAS10270).